Here is a 419-residue protein sequence, read N- to C-terminus: MSQDNNFSQGPVPQSARKGVLALTFVMLGLTFFSASMWTGGTLGTGLSYHDFFLAVLIGNLLLGIYTSFLGYIGAKTGLTTHLLARFSFGVKGSWLPSLLLGGTQVGWFGVGVAMFAIPVGKATGLDINLLIAVSGLLMTVTVFFGISALTVLSVIAVPAIACLGGYSVWLAVNGMGGLDALKAVVPAQPLDFNVALALVVGSFISAGTLTADFVRFGRNAKLAVLVAMVAFFLGNSLMFIFGAAGAAALGMADISDVMIAQGLLLPAIVVLGLNIWTTNDNALYASGLGFANITGMSSKTLSVINGIIGTVCALWLYNNFVGWLTFLSAAIPPVGGVIIADYLMNRRRYEHFATTRMMSVNWVAILAVALGIAAGHWLPGIVPVNAVLGGALSYLILNPILNRKTTAAMTHVEANSVE.

Topologically, residues 1–19 (MSQDNNFSQGPVPQSARKG) are cytoplasmic. A helical membrane pass occupies residues 20-39 (VLALTFVMLGLTFFSASMWT). The Periplasmic segment spans residues 40–51 (GGTLGTGLSYHD). The chain crosses the membrane as a helical span at residues 52–71 (FFLAVLIGNLLLGIYTSFLG). Over 72–100 (YIGAKTGLTTHLLARFSFGVKGSWLPSLL) the chain is Cytoplasmic. Residues 101–120 (LGGTQVGWFGVGVAMFAIPV) traverse the membrane as a helical segment. Residues 121 to 127 (GKATGLD) lie on the Periplasmic side of the membrane. The helical transmembrane segment at 128 to 147 (INLLIAVSGLLMTVTVFFGI) threads the bilayer. At 148 to 152 (SALTV) the chain is on the cytoplasmic side. A helical transmembrane segment spans residues 153–172 (LSVIAVPAIACLGGYSVWLA). The Periplasmic segment spans residues 173–192 (VNGMGGLDALKAVVPAQPLD). Residues 193–212 (FNVALALVVGSFISAGTLTA) traverse the membrane as a helical segment. Topologically, residues 213–221 (DFVRFGRNA) are cytoplasmic. Residues 222-242 (KLAVLVAMVAFFLGNSLMFIF) traverse the membrane as a helical segment. The Periplasmic portion of the chain corresponds to 243–257 (GAAGAAALGMADISD). A helical transmembrane segment spans residues 258 to 277 (VMIAQGLLLPAIVVLGLNIW). Over 278–300 (TTNDNALYASGLGFANITGMSSK) the chain is Cytoplasmic. A helical transmembrane segment spans residues 301–320 (TLSVINGIIGTVCALWLYNN). A topological domain (periplasmic) is located at residue phenylalanine 321. Residues 322 to 341 (VGWLTFLSAAIPPVGGVIIA) form a helical membrane-spanning segment. Residues 342–358 (DYLMNRRRYEHFATTRM) are Cytoplasmic-facing. The helical transmembrane segment at 359-378 (MSVNWVAILAVALGIAAGHW) threads the bilayer. Residues 379–380 (LP) are Periplasmic-facing. Residues 381 to 400 (GIVPVNAVLGGALSYLILNP) form a helical membrane-spanning segment. At 401 to 419 (ILNRKTTAAMTHVEANSVE) the chain is on the cytoplasmic side.

This sequence belongs to the purine-cytosine permease (2.A.39) family.

The protein resides in the cell inner membrane. Functionally, required for cytosine transport into the cell. This is Cytosine permease (codB) from Escherichia coli O6:H1 (strain CFT073 / ATCC 700928 / UPEC).